A 160-amino-acid polypeptide reads, in one-letter code: GTP-dependent dephospho-CoA kinase (160 aa).

Positions 45, 46, 47, 59, 61, 108, and 130 each coordinate GTP.

Belongs to the GTP-dependent DPCK family.

The enzyme catalyses 3'-dephospho-CoA + GTP = GDP + CoA + H(+). It functions in the pathway cofactor biosynthesis; coenzyme A biosynthesis. Its function is as follows. Catalyzes the GTP-dependent phosphorylation of the 3'-hydroxyl group of dephosphocoenzyme A to form coenzyme A (CoA). This Staphylothermus marinus (strain ATCC 43588 / DSM 3639 / JCM 9404 / F1) protein is GTP-dependent dephospho-CoA kinase.